The chain runs to 228 residues: Phosphoribosylformylglycinamidine synthase subunit PurQ (228 aa).

The Glutamine amidotransferase type-1 domain occupies 2-228 (TVVVVQFGGS…DGKGILQAFG (227 aa)). Residue Cys-88 is the Nucleophile of the active site. Residues His-205 and Glu-207 contribute to the active site.

As to quaternary structure, part of the FGAM synthase complex composed of 1 PurL, 1 PurQ and 2 PurS subunits.

It is found in the cytoplasm. It carries out the reaction N(2)-formyl-N(1)-(5-phospho-beta-D-ribosyl)glycinamide + L-glutamine + ATP + H2O = 2-formamido-N(1)-(5-O-phospho-beta-D-ribosyl)acetamidine + L-glutamate + ADP + phosphate + H(+). The catalysed reaction is L-glutamine + H2O = L-glutamate + NH4(+). It participates in purine metabolism; IMP biosynthesis via de novo pathway; 5-amino-1-(5-phospho-D-ribosyl)imidazole from N(2)-formyl-N(1)-(5-phospho-D-ribosyl)glycinamide: step 1/2. Part of the phosphoribosylformylglycinamidine synthase complex involved in the purines biosynthetic pathway. Catalyzes the ATP-dependent conversion of formylglycinamide ribonucleotide (FGAR) and glutamine to yield formylglycinamidine ribonucleotide (FGAM) and glutamate. The FGAM synthase complex is composed of three subunits. PurQ produces an ammonia molecule by converting glutamine to glutamate. PurL transfers the ammonia molecule to FGAR to form FGAM in an ATP-dependent manner. PurS interacts with PurQ and PurL and is thought to assist in the transfer of the ammonia molecule from PurQ to PurL. This is Phosphoribosylformylglycinamidine synthase subunit PurQ from Haloquadratum walsbyi (strain DSM 16790 / HBSQ001).